The primary structure comprises 323 residues: SPbeta prophage-derived uncharacterized protein YorG (323 aa).

The stretch at 222–272 (TAENLEKAIIEAVERQEQAEGIVAVTYEEQKQNNASEELDFNSLMDQIKEI) forms a coiled coil.

This Bacillus subtilis (strain 168) protein is SPbeta prophage-derived uncharacterized protein YorG (yorG).